The sequence spans 482 residues: UDP-N-acetylmuramoyl-L-alanyl-D-glutamate--2,6-diaminopimelate ligase (482 aa).

A UDP-N-acetyl-alpha-D-muramoyl-L-alanyl-D-glutamate-binding site is contributed by S29. G109–S115 contributes to the ATP binding site. UDP-N-acetyl-alpha-D-muramoyl-L-alanyl-D-glutamate-binding positions include T151–T152, S178, and R186. An N6-carboxylysine modification is found at K218. Residues R375, D399–R402, G451, and E455 each bind meso-2,6-diaminopimelate. A Meso-diaminopimelate recognition motif motif is present at residues D399–R402.

This sequence belongs to the MurCDEF family. MurE subfamily. The cofactor is Mg(2+). In terms of processing, carboxylation is probably crucial for Mg(2+) binding and, consequently, for the gamma-phosphate positioning of ATP.

The protein resides in the cytoplasm. It carries out the reaction UDP-N-acetyl-alpha-D-muramoyl-L-alanyl-D-glutamate + meso-2,6-diaminopimelate + ATP = UDP-N-acetyl-alpha-D-muramoyl-L-alanyl-gamma-D-glutamyl-meso-2,6-diaminopimelate + ADP + phosphate + H(+). It functions in the pathway cell wall biogenesis; peptidoglycan biosynthesis. Functionally, catalyzes the addition of meso-diaminopimelic acid to the nucleotide precursor UDP-N-acetylmuramoyl-L-alanyl-D-glutamate (UMAG) in the biosynthesis of bacterial cell-wall peptidoglycan. This chain is UDP-N-acetylmuramoyl-L-alanyl-D-glutamate--2,6-diaminopimelate ligase, found in Caldanaerobacter subterraneus subsp. tengcongensis (strain DSM 15242 / JCM 11007 / NBRC 100824 / MB4) (Thermoanaerobacter tengcongensis).